The primary structure comprises 298 residues: Zinc import ATP-binding protein ZnuC (298 aa).

Residues 17–232 (IELRNAGVYR…PEYVRLFGSR (216 aa)) enclose the ABC transporter domain. 49–56 (GPNGAGKS) serves as a coordination point for ATP. Residues 273-298 (RGHCHVEDGHHHDHEHHHHEGGQPRA) are disordered. The segment covering 276–298 (CHVEDGHHHDHEHHHHEGGQPRA) has biased composition (basic and acidic residues).

It belongs to the ABC transporter superfamily. Zinc importer (TC 3.A.1.15.5) family. The complex is composed of two ATP-binding proteins (ZnuC), two transmembrane proteins (ZnuB) and a solute-binding protein (ZnuA).

The protein localises to the cell inner membrane. The catalysed reaction is Zn(2+)(out) + ATP(in) + H2O(in) = Zn(2+)(in) + ADP(in) + phosphate(in) + H(+)(in). Part of the ABC transporter complex ZnuABC involved in zinc import. Responsible for energy coupling to the transport system. The chain is Zinc import ATP-binding protein ZnuC from Brucella abortus (strain 2308).